A 91-amino-acid chain; its full sequence is Large ribosomal subunit protein uL23c (91 aa).

This sequence belongs to the universal ribosomal protein uL23 family. As to quaternary structure, part of the 50S ribosomal subunit.

It localises to the plastid. The protein localises to the chloroplast. Its function is as follows. Binds to 23S rRNA. The sequence is that of Large ribosomal subunit protein uL23c (rpl23) from Huperzia lucidula (Shining clubmoss).